The following is a 222-amino-acid chain: Pre-mRNA cleavage factor Im 25 kDa subunit 1 (222 aa).

The Nudix hydrolase domain maps to 67-194; sequence GLRTCVEAVL…KLLAVPLCQL (128 aa). Residues 94 to 96 form an interaction with RNA region; that stretch reads SIF. Residues 101–122 carry the Nudix box motif; it reads GRLRPGESDIEGLKRKLASKLS.

The protein belongs to the Nudix hydrolase family. CPSF5 subfamily. Homodimer. Component of the cleavage factor Im (CFIm) complex. Forms a complex with cleavage and polyadenylation specificity factor (CPSF) subunits FIPS5.

The protein resides in the nucleus. In terms of biological role, component of the cleavage factor Im (CFIm) complex that plays a key role in pre-mRNA 3'-processing. Involved in association with CPSF6 or CPSF7 in pre-MRNA 3'-end poly(A) site cleavage and poly(A) addition. NUDT21/CPSF5 binds to cleavage and polyadenylation RNA substrates. The homodimer mediates simultaneous sequence-specific recognition of two 5'-UGUA-3' elements within the pre-mRNA. Binds to, but does not hydrolyze mono- and di-adenosine nucleotides. May have a role in mRNA export. This is Pre-mRNA cleavage factor Im 25 kDa subunit 1 from Arabidopsis thaliana (Mouse-ear cress).